The following is a 20-amino-acid chain: Thrombin-like enzyme Cdc SII (20 aa).

This sequence belongs to the peptidase S1 family. Snake venom subfamily. Monomer. In terms of tissue distribution, expressed by the venom gland.

The protein resides in the secreted. With respect to regulation, strongly inhibited by PMSF and moderately inhibited by leupeptin. Not inhibited by EDTA, aprotinin, pepstatin, and bestatin. Its function is as follows. Thrombin-like snake venom serine protease that coagulates human plasma and bovine fibrinogen by hydrolysis of the alpha chains (FGA) (minimum coagulation dose is 60 ug on fibrinogen). Has fibrinogenolytic activities, and degrades preferentially the Aalpha chain (FGA). Shows amidolytic activity toward N-benzoyl-L-Arg-p-nitroanilide, has a higher activity than Cdc SI. In vivo, intravenous injection induces defibrin(ogen)ation and a loss of the righting reflex and opisthotoxins, together with a typical gyroxin-like effect (18-20 minutes). Subcutaneous injection into the footpads induces moderate edema. Potentiates local hemorrhagic activity induced by metalloproteinases (BaP1). The polypeptide is Thrombin-like enzyme Cdc SII (Crotalus durissus cumanensis (South American rattlesnake)).